A 207-amino-acid polypeptide reads, in one-letter code: Cilia- and flagella-associated protein 418 (207 aa).

A required for interaction with FAM161A region spans residues methionine 1–asparagine 75. The tract at residues methionine 26–arginine 52 is disordered. Over residues serine 39–arginine 52 the composition is skewed to basic and acidic residues.

As to quaternary structure, interacts (via N-terminus) with FAM161A (via central region); the interaction is direct. Widely expressed, with highest levels in heart and brain. Also expressed in the retina (at protein level).

Its subcellular location is the cytoplasm. It localises to the photoreceptor inner segment. Functionally, may be involved in photoreceptor outer segment disk morphogenesis. This is Cilia- and flagella-associated protein 418 from Homo sapiens (Human).